The chain runs to 376 residues: Putative 12-oxophytodienoate reductase 13 (376 aa).

FMN contacts are provided by residues 25-27 (PLT), Ala-58, and Gln-99. 165–168 (HGAH) provides a ligand contact to substrate. FMN contacts are provided by residues Arg-217, Gly-301, and 322–323 (GR).

It belongs to the NADH:flavin oxidoreductase/NADH oxidase family. Requires FMN as cofactor.

Its function is as follows. Putative oxophytodienoate reductase that may be involved in the biosynthesis or metabolism of oxylipin signaling molecules. The chain is Putative 12-oxophytodienoate reductase 13 (OPR13) from Oryza sativa subsp. japonica (Rice).